Reading from the N-terminus, the 258-residue chain is Indole-3-glycerol phosphate synthase (258 aa).

The protein belongs to the TrpC family.

It carries out the reaction 1-(2-carboxyphenylamino)-1-deoxy-D-ribulose 5-phosphate + H(+) = (1S,2R)-1-C-(indol-3-yl)glycerol 3-phosphate + CO2 + H2O. It participates in amino-acid biosynthesis; L-tryptophan biosynthesis; L-tryptophan from chorismate: step 4/5. The chain is Indole-3-glycerol phosphate synthase from Geobacillus thermodenitrificans (strain NG80-2).